Reading from the N-terminus, the 581-residue chain is 2-isopropylmalate synthase (581 aa).

The region spanning 32–306 is the Pyruvate carboxyltransferase domain; sequence PQWCAVDLRD…DPQLDFSDIK (275 aa). Residues Asp-41, His-245, His-247, and Asn-281 each coordinate Mg(2+). The segment at 455 to 581 is regulatory domain; it reads RSAPVEQIAL…KHQQLQNGGV (127 aa).

The protein belongs to the alpha-IPM synthase/homocitrate synthase family. LeuA type 2 subfamily. Homodimer. Requires Mg(2+) as cofactor.

The protein resides in the cytoplasm. It carries out the reaction 3-methyl-2-oxobutanoate + acetyl-CoA + H2O = (2S)-2-isopropylmalate + CoA + H(+). The protein operates within amino-acid biosynthesis; L-leucine biosynthesis; L-leucine from 3-methyl-2-oxobutanoate: step 1/4. In terms of biological role, catalyzes the condensation of the acetyl group of acetyl-CoA with 3-methyl-2-oxobutanoate (2-ketoisovalerate) to form 3-carboxy-3-hydroxy-4-methylpentanoate (2-isopropylmalate). The chain is 2-isopropylmalate synthase from Corynebacterium efficiens (strain DSM 44549 / YS-314 / AJ 12310 / JCM 11189 / NBRC 100395).